Reading from the N-terminus, the 692-residue chain is Elongation factor G (692 aa).

The tr-type G domain maps to 8–283; the sequence is EDYRNFGIMA…AVVDYLPSPL (276 aa). Residues 17-24, 81-85, and 135-138 contribute to the GTP site; these read AHIDAGKT, DTPGH, and NKMD.

It belongs to the TRAFAC class translation factor GTPase superfamily. Classic translation factor GTPase family. EF-G/EF-2 subfamily.

The protein localises to the cytoplasm. Functionally, catalyzes the GTP-dependent ribosomal translocation step during translation elongation. During this step, the ribosome changes from the pre-translocational (PRE) to the post-translocational (POST) state as the newly formed A-site-bound peptidyl-tRNA and P-site-bound deacylated tRNA move to the P and E sites, respectively. Catalyzes the coordinated movement of the two tRNA molecules, the mRNA and conformational changes in the ribosome. The chain is Elongation factor G from Caulobacter sp. (strain K31).